The following is a 241-amino-acid chain: Mitochondrial inner membrane protease ATP23 (241 aa).

H141 is an a divalent metal cation binding site. Residue E142 is part of the active site. H145 provides a ligand contact to a divalent metal cation.

This sequence belongs to the peptidase M76 family.

It localises to the mitochondrion inner membrane. Functionally, has a dual role in the assembly of mitochondrial ATPase. Acts as a protease that removes N-terminal residues of mitochondrial ATPase CF(0) subunit 6 at the intermembrane space side. Also involved in the correct assembly of the membrane-embedded ATPase CF(0) particle, probably mediating association of subunit 6 with the subunit 9 ring. This chain is Mitochondrial inner membrane protease ATP23 (ATP23), found in Lodderomyces elongisporus (strain ATCC 11503 / CBS 2605 / JCM 1781 / NBRC 1676 / NRRL YB-4239) (Yeast).